The primary structure comprises 469 residues: RuvB-like helicase 2 (469 aa).

76 to 83 lines the ATP pocket; the sequence is GPPSTGKT.

The protein belongs to the RuvB family. As to quaternary structure, may form heterododecamers with RVB1. Component of the SWR1 chromatin remodeling complex, the INO80 chromatin remodeling complex, and of the R2TP complex.

The protein localises to the nucleus. It catalyses the reaction ATP + H2O = ADP + phosphate + H(+). Its function is as follows. DNA helicase which participates in several chromatin remodeling complexes, including the SWR1 and the INO80 complexes. The SWR1 complex mediates the ATP-dependent exchange of histone H2A for the H2A variant HZT1 leading to transcriptional regulation of selected genes by chromatin remodeling. The INO80 complex remodels chromatin by shifting nucleosomes and is involved in DNA repair. Also involved in pre-rRNA processing. The polypeptide is RuvB-like helicase 2 (rvb2) (Aspergillus fumigatus (strain ATCC MYA-4609 / CBS 101355 / FGSC A1100 / Af293) (Neosartorya fumigata)).